We begin with the raw amino-acid sequence, 307 residues long: Barttin (307 aa).

Over 1–5 (MADEK) the chain is Cytoplasmic. Residues 1–72 (MADEKTFRIG…VPADSDFQGI (72 aa)) form a regulates channel membrane trafficking and anion conductance region. A helical membrane pass occupies residues 6 to 26 (TFRIGFIVLGLFLLSLGTFLM). Residues 27–32 (SHDRPQ) lie on the Extracellular side of the membrane. A helical transmembrane segment spans residues 33-53 (VYGTFYAMGSVMVIGGVIWSM). 2 S-palmitoyl cysteine lipidation sites follow: Cys-54 and Cys-56. Residues 54–307 (CQCYPKITFV…ELGFEPDIQG (254 aa)) lie on the Cytoplasmic side of the membrane. Phosphoserine occurs at positions 79 and 107. Disordered regions lie at residues 135–154 (TGASSVREGEPRTAQAWMEA) and 161–224 (GSDE…RGPL). The segment covering 161-171 (GSDENEGEKSH) has biased composition (basic and acidic residues). Ser-162 bears the Phosphoserine mark. Low complexity predominate over residues 172-183 (SQSSPSVGPQGS). Polar residues predominate over residues 198–207 (SEGSSLQPSP). Ser-228 and Ser-289 each carry phosphoserine. Positions 255 to 307 (RKQQWSLRMKGETVQARAEEPEQEEEDLYYGLPDSPGNPLPDKELGFEPDIQG) are disordered.

As to quaternary structure, interacts with CLCNK channels. Forms probably heteromers with CLCNKA in the thin ascending limb of Henle and with CLCNKB in the thick ascending limb and more distal segments. Palmitoylation is necessary for activation of plasma membrane-inserted CLC-K/barttin channels. In terms of tissue distribution, expression is evident in inner and outer stripes of the outer medulla of the kidney, most probably representing thin limbs of Henle's loop together with some collecting duct coursing through the outer stripe. In situ hybridization in fetal kidney at 18.5 dpc revealed a clear continuity between hybridization signals from the thin limb of Henle's loop and the distal convoluted tubule, suggesting that part of the expression pattern may result from expression in the thick ascending limb of Henle's loop. In addition, strong signals are present in a subset of cortical tubules, representing distal convoluted tubules or cortical collecting duct. Strong expression is also observed in the inner medulla of the kidney. This expression does not extend all the way to the tip of the papilla. Thus this signal most probably represents cells of the thin ascending limbs. In the inner ear, strong and exclusive expression is detected in marginal cells of the stria vascularis. In addition to cochlear signal, expression is observed in dark cells localized at the base of the crista ampullaris of the vestibular organ.

The protein localises to the basolateral cell membrane. Functionally, regulatory subunit of anion-selective CLCNKA:BSND and CLCNKB:BSND heteromeric channels involved in basolateral chloride conductance along the nephron to achieve urine concentration and maintain systemic acid-base homeostasis, and in the stria vascularis of the inner ear to establish the endocochlear potential necessary for normal hearing. Most likely acts as a chaperone that allosterically regulates proper sorting of CLCNKA:BSND and CLCNKB:BSND channels at the basolateral plasma membrane domain and functional switch to ion conducting state. Mediates constitutive opening of channel common gates. This is Barttin from Mus musculus (Mouse).